The chain runs to 458 residues: Jacalin-related lectin 22 (458 aa).

Jacalin-type lectin domains follow at residues 5–153 (YRKL…YFVL), 160–301 (LYKL…YFGP), and 311–453 (SKKL…TIVP).

Belongs to the jacalin lectin family. Component of the PYK10 complex, at least composed of PYK10/BGLU23, BGLU21, BGLU22, JAL22, JAL23, PBP1/JAL30, PBP2/JAL31, JAL32, JAL33, JAL34, JAL35, GLL22 and GLL23.

Inhibitor-type lectin that may regulate the correct polymerization and activation of BGLU23/PYK10 upon tissue damage. This Arabidopsis thaliana (Mouse-ear cress) protein is Jacalin-related lectin 22 (JAL22).